The sequence spans 113 residues: Hydrogenase maturation factor HypA (113 aa).

A Ni(2+)-binding site is contributed by histidine 2. The Zn(2+) site is built by cysteine 73, cysteine 76, cysteine 89, and cysteine 92.

Belongs to the HypA/HybF family.

Its function is as follows. Involved in the maturation of [NiFe] hydrogenases. Required for nickel insertion into the metal center of the hydrogenase. This Legionella pneumophila subsp. pneumophila (strain Philadelphia 1 / ATCC 33152 / DSM 7513) protein is Hydrogenase maturation factor HypA.